Consider the following 699-residue polypeptide: Polyribonucleotide nucleotidyltransferase (699 aa).

Mg(2+)-binding residues include Asp-485 and Asp-491. The 60-residue stretch at 552–611 (PRITVIKINPEKIRDVIGKGGAVIRALTEETGTTIELEDDGTVKIASSNGEATKEAIRRI) folds into the KH domain. The 69-residue stretch at 621-689 (GRIYNGKVIR…RQGRVRLSIK (69 aa)) folds into the S1 motif domain.

It belongs to the polyribonucleotide nucleotidyltransferase family. In terms of assembly, component of the RNA degradosome, which is a multiprotein complex involved in RNA processing and mRNA degradation. The cofactor is Mg(2+).

It is found in the cytoplasm. It carries out the reaction RNA(n+1) + phosphate = RNA(n) + a ribonucleoside 5'-diphosphate. Involved in mRNA degradation. Catalyzes the phosphorolysis of single-stranded polyribonucleotides processively in the 3'- to 5'-direction. The chain is Polyribonucleotide nucleotidyltransferase from Shewanella baltica (strain OS223).